The chain runs to 306 residues: tRNA dimethylallyltransferase (306 aa).

Residue 15-22 coordinates ATP; the sequence is GPTASGKS. Residue 17–22 coordinates substrate; it reads TASGKS. Positions 40–43 are interaction with substrate tRNA; it reads DSMQ.

Belongs to the IPP transferase family. In terms of assembly, monomer. Requires Mg(2+) as cofactor.

The enzyme catalyses adenosine(37) in tRNA + dimethylallyl diphosphate = N(6)-dimethylallyladenosine(37) in tRNA + diphosphate. In terms of biological role, catalyzes the transfer of a dimethylallyl group onto the adenine at position 37 in tRNAs that read codons beginning with uridine, leading to the formation of N6-(dimethylallyl)adenosine (i(6)A). The sequence is that of tRNA dimethylallyltransferase from Methylobacterium sp. (strain 4-46).